The primary structure comprises 339 residues: Ketol-acid reductoisomerase (NADP(+)) (339 aa).

The region spanning 1 to 182 (MRVYYDRDAD…GGGRAGIIET (182 aa)) is the KARI N-terminal Rossmann domain. Residues 24 to 27 (YGSQ), Arg-48, Ser-51, Thr-53, and 83 to 86 (DELQ) each bind NADP(+). Residue His-108 is part of the active site. Gly-134 is a binding site for NADP(+). One can recognise a KARI C-terminal knotted domain in the interval 183 to 328 (TFREECETDL…AKLRAMMPWI (146 aa)). Asp-191, Glu-195, Glu-227, and Glu-231 together coordinate Mg(2+). Ser-252 provides a ligand contact to substrate.

The protein belongs to the ketol-acid reductoisomerase family. Requires Mg(2+) as cofactor.

The enzyme catalyses (2R)-2,3-dihydroxy-3-methylbutanoate + NADP(+) = (2S)-2-acetolactate + NADPH + H(+). It catalyses the reaction (2R,3R)-2,3-dihydroxy-3-methylpentanoate + NADP(+) = (S)-2-ethyl-2-hydroxy-3-oxobutanoate + NADPH + H(+). It functions in the pathway amino-acid biosynthesis; L-isoleucine biosynthesis; L-isoleucine from 2-oxobutanoate: step 2/4. Its pathway is amino-acid biosynthesis; L-valine biosynthesis; L-valine from pyruvate: step 2/4. Involved in the biosynthesis of branched-chain amino acids (BCAA). Catalyzes an alkyl-migration followed by a ketol-acid reduction of (S)-2-acetolactate (S2AL) to yield (R)-2,3-dihydroxy-isovalerate. In the isomerase reaction, S2AL is rearranged via a Mg-dependent methyl migration to produce 3-hydroxy-3-methyl-2-ketobutyrate (HMKB). In the reductase reaction, this 2-ketoacid undergoes a metal-dependent reduction by NADPH to yield (R)-2,3-dihydroxy-isovalerate. The sequence is that of Ketol-acid reductoisomerase (NADP(+)) from Methylocella silvestris (strain DSM 15510 / CIP 108128 / LMG 27833 / NCIMB 13906 / BL2).